The primary structure comprises 105 residues: Large ribosomal subunit protein uL24 (105 aa).

The protein belongs to the universal ribosomal protein uL24 family. As to quaternary structure, part of the 50S ribosomal subunit.

One of two assembly initiator proteins, it binds directly to the 5'-end of the 23S rRNA, where it nucleates assembly of the 50S subunit. Its function is as follows. One of the proteins that surrounds the polypeptide exit tunnel on the outside of the subunit. The sequence is that of Large ribosomal subunit protein uL24 from Lachnoclostridium phytofermentans (strain ATCC 700394 / DSM 18823 / ISDg) (Clostridium phytofermentans).